The primary structure comprises 551 residues: Putative ABC transporter ATP-binding protein BA_3364/GBAA_3364/BAS3118 (551 aa).

2 ABC transporter domains span residues 5 to 243 and 293 to 525; these read AEIK…FRPF and LSAE…SINR. Residues 39–46 and 327–334 each bind ATP; these read GGSGSGKT and GKNGTGKS.

Belongs to the ABC transporter superfamily.

It is found in the cell membrane. Functionally, probably part of an ABC transporter complex. Responsible for energy coupling to the transport system. This Bacillus anthracis protein is Putative ABC transporter ATP-binding protein BA_3364/GBAA_3364/BAS3118.